The chain runs to 360 residues: Dual-specificity RNA methyltransferase RlmN (360 aa).

The active-site Proton acceptor is Glu-91. One can recognise a Radical SAM core domain in the interval 110–343 (RSEKYTVCIS…CTIRESKGLD (234 aa)). A disulfide bond links Cys-117 and Cys-348. [4Fe-4S] cluster is bound by residues Cys-124, Cys-128, and Cys-131. S-adenosyl-L-methionine contacts are provided by residues 174-175 (GE), Ser-206, 229-231 (SLH), and Asn-305. The active-site S-methylcysteine intermediate is Cys-348.

Belongs to the radical SAM superfamily. RlmN family. [4Fe-4S] cluster serves as cofactor.

It localises to the cytoplasm. The enzyme catalyses adenosine(2503) in 23S rRNA + 2 reduced [2Fe-2S]-[ferredoxin] + 2 S-adenosyl-L-methionine = 2-methyladenosine(2503) in 23S rRNA + 5'-deoxyadenosine + L-methionine + 2 oxidized [2Fe-2S]-[ferredoxin] + S-adenosyl-L-homocysteine. It carries out the reaction adenosine(37) in tRNA + 2 reduced [2Fe-2S]-[ferredoxin] + 2 S-adenosyl-L-methionine = 2-methyladenosine(37) in tRNA + 5'-deoxyadenosine + L-methionine + 2 oxidized [2Fe-2S]-[ferredoxin] + S-adenosyl-L-homocysteine. Specifically methylates position 2 of adenine 2503 in 23S rRNA and position 2 of adenine 37 in tRNAs. m2A2503 modification seems to play a crucial role in the proofreading step occurring at the peptidyl transferase center and thus would serve to optimize ribosomal fidelity. This Aliarcobacter butzleri (strain RM4018) (Arcobacter butzleri) protein is Dual-specificity RNA methyltransferase RlmN.